The following is a 227-amino-acid chain: Chaperone protein FocC (227 aa).

A signal peptide spans methionine 1–alanine 21.

It belongs to the periplasmic pilus chaperone family.

Its subcellular location is the periplasm. In terms of biological role, involved in the biogenesis of the F1C fimbriae. This is Chaperone protein FocC (focC) from Escherichia coli O6:H1 (strain CFT073 / ATCC 700928 / UPEC).